The following is a 157-amino-acid chain: Small ribosomal subunit protein uS7 (157 aa).

The protein belongs to the universal ribosomal protein uS7 family. Part of the 30S ribosomal subunit. Contacts proteins S9 and S11.

One of the primary rRNA binding proteins, it binds directly to 16S rRNA where it nucleates assembly of the head domain of the 30S subunit. Is located at the subunit interface close to the decoding center, probably blocks exit of the E-site tRNA. The polypeptide is Small ribosomal subunit protein uS7 (Polaromonas sp. (strain JS666 / ATCC BAA-500)).